The primary structure comprises 602 residues: Protein NRT1/ PTR FAMILY 5.7 (602 aa).

A run of 2 helical transmembrane segments spans residues 56-73 and 87-107; these read LSYF…TTIL and WSGV…AYLG. Thr-111 is subject to Phosphothreonine. 10 consecutive transmembrane segments (helical) span residues 112–132, 152–172, 197–217, 220–240, 337–357, 381–401, 422–442, 465–485, 500–520, and 548–568; these read VLLA…SWFI, IAFF…KPSL, WWNA…VYIE, IGWG…FFIF, VKLL…GVCA, IVPP…TVTI, ILQR…IAAL, IWLA…LVGL, LGIA…NLLI, and FYWM…IVAM.

This sequence belongs to the major facilitator superfamily. Proton-dependent oligopeptide transporter (POT/PTR) (TC 2.A.17) family. Expressed in shoots, stems, leaves and flowers.

The protein resides in the membrane. This chain is Protein NRT1/ PTR FAMILY 5.7 (NPF5.7), found in Arabidopsis thaliana (Mouse-ear cress).